A 56-amino-acid polypeptide reads, in one-letter code: Large ribosomal subunit protein bL32 (56 aa).

Residues M1–P23 form a disordered region. Residues T9–H19 show a composition bias toward basic residues.

Belongs to the bacterial ribosomal protein bL32 family.

The polypeptide is Large ribosomal subunit protein bL32 (Blochmanniella floridana).